Consider the following 425-residue polypeptide: Exodeoxyribonuclease 7 large subunit (425 aa).

This sequence belongs to the XseA family. Heterooligomer composed of large and small subunits.

The protein localises to the cytoplasm. It carries out the reaction Exonucleolytic cleavage in either 5'- to 3'- or 3'- to 5'-direction to yield nucleoside 5'-phosphates.. Its function is as follows. Bidirectionally degrades single-stranded DNA into large acid-insoluble oligonucleotides, which are then degraded further into small acid-soluble oligonucleotides. The protein is Exodeoxyribonuclease 7 large subunit of Nocardia farcinica (strain IFM 10152).